The primary structure comprises 275 residues: MSARGGSLHGRVAFVTGAARAQGRSHAVRLAREGADIVALDICAPVSGSVTYPPATSEDLGETVRAVEAEGRKVLAREVDIRDDAELRRLVADGVEQFGRLDIVVANAGVLGWGRLWELTDEQWETVIGVNLTGTWRTLRATVPAMIDAGNGGSIVVVSSSAGLKATPGNGHYAASKHALVALTNTLAIELGEFGIRVNSIHPYSVDTPMIEPEAMIQTFAKHPGYVHSFPPMPLQPKGFMTPDEISDVVVWLAGDGSGALSGNQIPVDKGALKY.

NAD(+)-binding positions include 20–22 (RAQ), 41–42 (DI), 80–81 (DI), and Asn107. Ser160 is a binding site for substrate. Tyr173 serves as the catalytic Proton acceptor. NAD(+) is bound by residues Lys177 and 206 to 208 (VDT).

The protein belongs to the short-chain dehydrogenases/reductases (SDR) family.

This is an uncharacterized protein from Mycobacterium tuberculosis (strain CDC 1551 / Oshkosh).